A 181-amino-acid chain; its full sequence is Large ribosomal subunit protein uL5 (181 aa).

Belongs to the universal ribosomal protein uL5 family. Part of the 50S ribosomal subunit; part of the 5S rRNA/L5/L18/L25 subcomplex. Contacts the 5S rRNA and the P site tRNA. Forms a bridge to the 30S subunit in the 70S ribosome.

Functionally, this is one of the proteins that bind and probably mediate the attachment of the 5S RNA into the large ribosomal subunit, where it forms part of the central protuberance. In the 70S ribosome it contacts protein S13 of the 30S subunit (bridge B1b), connecting the 2 subunits; this bridge is implicated in subunit movement. Contacts the P site tRNA; the 5S rRNA and some of its associated proteins might help stabilize positioning of ribosome-bound tRNAs. In Helicobacter pylori (strain Shi470), this protein is Large ribosomal subunit protein uL5.